Consider the following 646-residue polypeptide: MEPAAGFLSPRPFQRAAAAPAPPAGPGPPPSALRGPELEMLAGLPTSDPGRLITDPRSGRTYLKGRLLGKGGFARCYEATDTETGSAYAVKVIPQSRVAKPHQREKILNEIELHRDLQHRHIVRFSHHFEDADNIYIFLELCSRKSLAHIWKARHTLLEPEVRYYLRQILSGLKYLHQRGILHRDLKLGNFFITENMELKVGDFGLAARLEPPEQRKKTICGTPNYVAPEVLLRQGHGPEADVWSLGCVMYTLLCGSPPFETADLKETYRCIKQVHYTLPASLSLPARQLLAAILRASPRDRPSIDQILRHDFFTKGYTPDRLPISSCVTVPDLTPPNPARSLFAKVTKSLFGRKKKSKNHAQERDEVSGLVSGLMRTSVGHQDARPEAPAASGPAPVSLVETAPEDSSPRGTLASSGDGFEEGLTVATVVESALCALRNCIAFMPPAEQNPAPLAQPEPLVWVSKWVDYSNKFGFGYQLSSRRVAVLFNDGTHMALSANRKTVHYNPTSTKHFSFSVGAVPRALQPQLGILRYFASYMEQHLMKGGDLPSVEEVEVPAPPLLLQWVKTDQALLMLFSDGTVQVNFYGDHTKLILSGWEPLLVTFVARNRSACTYLASHLRQLGCSPDLRQRLRYALRLLRDRSPA.

A disordered region spans residues 1-35 (MEPAAGFLSPRPFQRAAAAPAPPAGPGPPPSALRG). The segment covering 10-19 (PRPFQRAAAA) has biased composition (low complexity). Over residues 20–31 (PAPPAGPGPPPS) the composition is skewed to pro residues. In terms of domain architecture, Protein kinase spans 62 to 314 (YLKGRLLGKG…IDQILRHDFF (253 aa)). Residues 68–76 (LGKGGFARC) and K91 each bind ATP. The active-site Proton acceptor is D185. Residues 381–417 (GHQDARPEAPAASGPAPVSLVETAPEDSSPRGTLASS) form a disordered region. POLO box domains lie at 463 to 541 (WVSK…YMEQ) and 562 to 645 (LLLQ…DRSP).

This sequence belongs to the protein kinase superfamily. Ser/Thr protein kinase family. CDC5/Polo subfamily. In terms of assembly, interacts (via the POLO-box domain) with CIB1; leading to inhibit PLK3 kinase activity. Interacts with GOLGB1. Post-translationally, phosphorylated in an ATM-dependent manner following DNA damage. Phosphorylated as cells enter mitosis and dephosphorylated as cells exit mitosis. In terms of tissue distribution, transcripts are highly detected in placenta, lung, followed by skeletal muscle, heart, pancreas, ovaries and kidney and weakly detected in liver and brain. May have a short half-live. In cells of hematopoietic origin, strongly and exclusively detected in terminally differentiated macrophages. Transcript expression appears to be down-regulated in primary lung tumor.

Its subcellular location is the cytoplasm. The protein localises to the nucleus. The protein resides in the nucleolus. It is found in the golgi apparatus. It localises to the cytoskeleton. Its subcellular location is the microtubule organizing center. The protein localises to the centrosome. The enzyme catalyses L-seryl-[protein] + ATP = O-phospho-L-seryl-[protein] + ADP + H(+). It carries out the reaction L-threonyl-[protein] + ATP = O-phospho-L-threonyl-[protein] + ADP + H(+). Serine/threonine-protein kinase involved in cell cycle regulation, response to stress and Golgi disassembly. Polo-like kinases act by binding and phosphorylating proteins that are already phosphorylated on a specific motif recognized by the POLO box domains. Phosphorylates ATF2, BCL2L1, CDC25A, CDC25C, CHEK2, HIF1A, JUN, p53/TP53, p73/TP73, PTEN, TOP2A and VRK1. Involved in cell cycle regulation: required for entry into S phase and cytokinesis. Phosphorylates BCL2L1, leading to regulate the G2 checkpoint and progression to cytokinesis during mitosis. Plays a key role in response to stress: rapidly activated upon stress stimulation, such as ionizing radiation, reactive oxygen species (ROS), hyperosmotic stress, UV irradiation and hypoxia. Involved in DNA damage response and G1/S transition checkpoint by phosphorylating CDC25A, p53/TP53 and p73/TP73. Phosphorylates p53/TP53 in response to reactive oxygen species (ROS), thereby promoting p53/TP53-mediated apoptosis. Phosphorylates CHEK2 in response to DNA damage, promoting the G2/M transition checkpoint. Phosphorylates the transcription factor p73/TP73 in response to DNA damage, leading to inhibit p73/TP73-mediated transcriptional activation and pro-apoptotic functions. Phosphorylates HIF1A and JUN is response to hypoxia. Phosphorylates ATF2 following hyperosmotic stress in corneal epithelium. Also involved in Golgi disassembly during the cell cycle: part of a MEK1/MAP2K1-dependent pathway that induces Golgi fragmentation during mitosis by mediating phosphorylation of VRK1. May participate in endomitotic cell cycle, a form of mitosis in which both karyokinesis and cytokinesis are interrupted and is a hallmark of megakaryocyte differentiation, via its interaction with CIB1. The chain is Serine/threonine-protein kinase PLK3 (PLK3) from Homo sapiens (Human).